A 687-amino-acid chain; its full sequence is Protein SDA1 homolog (687 aa).

Phosphoserine occurs at positions 232, 234, and 236. Positions 254 to 315 form a coiled coil; the sequence is KKGSKNKKKL…SCKERFEVKM (62 aa). A disordered region spans residues 484–509; the sequence is LEKGENTEDDEDGWESASLSEEEEED. Positions 490 to 509 are enriched in acidic residues; that stretch reads TEDDEDGWESASLSEEEEED. The residue at position 552 (T552) is a Phosphothreonine. Phosphoserine occurs at positions 585, 589, and 595. A disordered region spans residues 604-651; the sequence is KKPKSDKETRLATAMAGRTDRKEFVRKKTKINPFSSSTNKEKKKQKNF.

The protein belongs to the SDA1 family.

It is found in the nucleus. Its subcellular location is the nucleolus. Its function is as follows. Required for 60S pre-ribosomal subunits export to the cytoplasm. The protein is Protein SDA1 homolog (Sdad1) of Mus musculus (Mouse).